The chain runs to 93 residues: Large ribosomal subunit protein uL23 (93 aa).

It belongs to the universal ribosomal protein uL23 family. Part of the 50S ribosomal subunit. Contacts protein L29, and trigger factor when it is bound to the ribosome.

Its function is as follows. One of the early assembly proteins it binds 23S rRNA. One of the proteins that surrounds the polypeptide exit tunnel on the outside of the ribosome. Forms the main docking site for trigger factor binding to the ribosome. This chain is Large ribosomal subunit protein uL23, found in Campylobacter jejuni subsp. doylei (strain ATCC BAA-1458 / RM4099 / 269.97).